A 580-amino-acid polypeptide reads, in one-letter code: Guanine nucleotide-binding protein alpha-4 subunit (580 aa).

Residues 1–10 are compositionally biased toward polar residues; it reads MSPSVSSPQL. The disordered stretch occupies residues 1–28; it reads MSPSVSSPQLRHTKSNRAISRIDRTDPL. The G-alpha domain maps to 93–579; sequence RVYKMVLLGQ…RENLKLTGLV (487 aa). The G1 motif stretch occupies residues 96 to 109; that stretch reads KMVLLGQAGAGKTT. 101-108 provides a ligand contact to GTP; it reads GQAGAGKT. Disordered stretches follow at residues 160 to 196 and 302 to 325; these read KSSE…PNDA and GRAA…KDNS. The segment covering 167-183 has biased composition (low complexity); it reads LESSTSASTSTSASASS. A G2 motif region spans residues 387–395; sequence DILHSRVRT. Residues 389-395, 415-419, 484-487, and alanine 551 each bind GTP; these read LHSRVRT, DVGGS, and NKID. Mg(2+) is bound at residue threonine 395. The segment at 411–420 is G3 motif; that stretch reads YRIYDVGGSR. Residues 480–487 are G4 motif; the sequence is ILFLNKID. The segment at 549–554 is G5 motif; the sequence is TVATST.

The protein belongs to the G-alpha family. In terms of assembly, g proteins are composed of 3 units; alpha, beta and gamma. The alpha chain contains the guanine nucleotide binding site.

Its function is as follows. Guanine nucleotide-binding proteins (G proteins) are involved as modulators or transducers in various transmembrane signaling systems. The polypeptide is Guanine nucleotide-binding protein alpha-4 subunit (GPA4) (Mycosarcoma maydis (Corn smut fungus)).